We begin with the raw amino-acid sequence, 283 residues long: Foldase protein PrsA 3 (283 aa).

The N-terminal stretch at Met-1–Ala-21 is a signal peptide. Cys-22 is lipidated: N-palmitoyl cysteine. Cys-22 is lipidated: S-diacylglycerol cysteine. The region spanning Lys-132 to Asp-222 is the PpiC domain.

The protein belongs to the PrsA family.

The protein localises to the cell membrane. The catalysed reaction is [protein]-peptidylproline (omega=180) = [protein]-peptidylproline (omega=0). Its function is as follows. Plays a major role in protein secretion by helping the post-translocational extracellular folding of several secreted proteins. Important for the secretion of the protective antigen. The three PsrA proteins in this organism show different but overlapping substrate specificities. This is Foldase protein PrsA 3 (prsA3) from Bacillus anthracis.